A 484-amino-acid polypeptide reads, in one-letter code: Cobyric acid synthase (484 aa).

Residues 251–438 (ALKIAVPVLP…LHGLFCSDAY (188 aa)) form the GATase cobBQ-type domain. Cys333 (nucleophile) is an active-site residue. His430 is a catalytic residue.

Belongs to the CobB/CobQ family. CobQ subfamily.

Its pathway is cofactor biosynthesis; adenosylcobalamin biosynthesis. Catalyzes amidations at positions B, D, E, and G on adenosylcobyrinic A,C-diamide. NH(2) groups are provided by glutamine, and one molecule of ATP is hydrogenolyzed for each amidation. In Rhizobium rhizogenes (strain K84 / ATCC BAA-868) (Agrobacterium radiobacter), this protein is Cobyric acid synthase.